The chain runs to 292 residues: Polyketide transferase af380 (292 aa).

The segment at 46 to 267 (DVAVWFQQQG…FDLVAGRGHM (222 aa)) is abhydrolase domain.

It belongs to the polyketide transferase af380 family.

It carries out the reaction fumagillol + dodecapentaneoyl-[polyketide synthase] = prefumagillin + holo-[polyketide synthase]. The protein operates within secondary metabolite biosynthesis; terpenoid biosynthesis. Functionally, polyketide transferase; part of the gene cluster that mediates the biosynthesis of fumagillin, a meroterpenoid that has numerous biological activities including irreversible inhibition of human type 2 methionine aminopeptidase (METAP2). Within the pathway, the polyketide transferase af380 catalyzes the transfer of a dodecapentaenoyl group synthesized by the polyketide synthase af370 onto 5R-hydroxy-seco-sesquiterpene to produce prefumagillin. The pathway begins with the conversion of farnesyl pyrophosphate (FPP) to beta-trans-bergamotene by the membrane-bound beta-trans-bergamotene synthase af520. The multifunctional cytochrome P450 monooxygenase af510 then converts beta-trans-bergamotene into 5-keto-demethoxyfumagillol via several oxydation steps. 5-keto-demethoxyfumagillol is then subjected to successive C-6 hydroxylation and O-methylation by the dioxygenase af480 and O-methyltransferase af390-400, respectively, to yield 5-keto-fumagillol, which is then stereoselectively reduced by the keto-reductase af490 to 5R-hydroxy-seco-sesquiterpene. The next step is the polyketide transferase af380-catalyzed transfer of a dodecapentaenoyl group synthesized by the polyketide synthase af370 onto 5R-hydroxy-seco-sesquiterpene which leads to the production of prefumagillin. Finally, oxidative cleavage by the monooxygenase af470 converts prefumagillin to fumagillin. The polypeptide is Polyketide transferase af380 (Aspergillus fumigatus (strain ATCC MYA-4609 / CBS 101355 / FGSC A1100 / Af293) (Neosartorya fumigata)).